A 264-amino-acid chain; its full sequence is Acyl-[acyl-carrier-protein]--UDP-N-acetylglucosamine O-acyltransferase (264 aa).

The protein belongs to the transferase hexapeptide repeat family. LpxA subfamily. Homotrimer.

The protein localises to the cytoplasm. The enzyme catalyses a (3R)-hydroxyacyl-[ACP] + UDP-N-acetyl-alpha-D-glucosamine = a UDP-3-O-[(3R)-3-hydroxyacyl]-N-acetyl-alpha-D-glucosamine + holo-[ACP]. The protein operates within glycolipid biosynthesis; lipid IV(A) biosynthesis; lipid IV(A) from (3R)-3-hydroxytetradecanoyl-[acyl-carrier-protein] and UDP-N-acetyl-alpha-D-glucosamine: step 1/6. Functionally, involved in the biosynthesis of lipid A, a phosphorylated glycolipid that anchors the lipopolysaccharide to the outer membrane of the cell. This Chlorobaculum parvum (strain DSM 263 / NCIMB 8327) (Chlorobium vibrioforme subsp. thiosulfatophilum) protein is Acyl-[acyl-carrier-protein]--UDP-N-acetylglucosamine O-acyltransferase.